A 439-amino-acid chain; its full sequence is 26S rRNA (cytosine-C(5))-methyltransferase nsun-5 (439 aa).

Positions 266, 293, and 313 each coordinate S-adenosyl-L-methionine. The active-site Nucleophile is Cys366.

The protein belongs to the class I-like SAM-binding methyltransferase superfamily. RsmB/NOP family.

The enzyme catalyses a cytidine in 26S rRNA + S-adenosyl-L-methionine = a 5-methylcytidine in 26S rRNA + S-adenosyl-L-homocysteine + H(+). Its function is as follows. S-adenosyl-L-methionine-dependent methyltransferase which methylates the carbon-5 position of cytosine 2381 to 5-methylcytosine (m5C2381) in 26S rRNA. Plays a role in the production of mature 5S, 5.8S, 18S and 26S rRNAs and promotes the processing of the internally transcribed spacer 2 (ITS2), which separates the 5.8S and 26S rRNAs on large pre-rRNA precursors. May play a role in the translation of leucine and proline codons. May play a role in maintaining ribosomal frameshifting in response to osmotic stress. Not required for global translation. This chain is 26S rRNA (cytosine-C(5))-methyltransferase nsun-5, found in Caenorhabditis elegans.